Consider the following 298-residue polypeptide: ATP synthase gamma chain (298 aa).

This sequence belongs to the ATPase gamma chain family. As to quaternary structure, F-type ATPases have 2 components, CF(1) - the catalytic core - and CF(0) - the membrane proton channel. CF(1) has five subunits: alpha(3), beta(3), gamma(1), delta(1), epsilon(1). CF(0) has three main subunits: a, b and c.

It localises to the cell inner membrane. Functionally, produces ATP from ADP in the presence of a proton gradient across the membrane. The gamma chain is believed to be important in regulating ATPase activity and the flow of protons through the CF(0) complex. This chain is ATP synthase gamma chain, found in Wolinella succinogenes (strain ATCC 29543 / DSM 1740 / CCUG 13145 / JCM 31913 / LMG 7466 / NCTC 11488 / FDC 602W) (Vibrio succinogenes).